A 374-amino-acid polypeptide reads, in one-letter code: Queuine tRNA-ribosyltransferase (374 aa).

Aspartate 94 (proton acceptor) is an active-site residue. Substrate-binding positions include 94-98 (DSGGF), aspartate 148, glutamine 191, and glycine 218. An RNA binding region spans residues 249–255 (GVGSPDY). Aspartate 268 (nucleophile) is an active-site residue. Positions 273-277 (TRIGR) are RNA binding; important for wobble base 34 recognition. The Zn(2+) site is built by cysteine 306, cysteine 308, cysteine 311, and histidine 337.

This sequence belongs to the queuine tRNA-ribosyltransferase family. In terms of assembly, homodimer. Within each dimer, one monomer is responsible for RNA recognition and catalysis, while the other monomer binds to the replacement base PreQ1. Zn(2+) serves as cofactor.

The enzyme catalyses 7-aminomethyl-7-carbaguanine + guanosine(34) in tRNA = 7-aminomethyl-7-carbaguanosine(34) in tRNA + guanine. It functions in the pathway tRNA modification; tRNA-queuosine biosynthesis. In terms of biological role, catalyzes the base-exchange of a guanine (G) residue with the queuine precursor 7-aminomethyl-7-deazaguanine (PreQ1) at position 34 (anticodon wobble position) in tRNAs with GU(N) anticodons (tRNA-Asp, -Asn, -His and -Tyr). Catalysis occurs through a double-displacement mechanism. The nucleophile active site attacks the C1' of nucleotide 34 to detach the guanine base from the RNA, forming a covalent enzyme-RNA intermediate. The proton acceptor active site deprotonates the incoming PreQ1, allowing a nucleophilic attack on the C1' of the ribose to form the product. After dissociation, two additional enzymatic reactions on the tRNA convert PreQ1 to queuine (Q), resulting in the hypermodified nucleoside queuosine (7-(((4,5-cis-dihydroxy-2-cyclopenten-1-yl)amino)methyl)-7-deazaguanosine). The polypeptide is Queuine tRNA-ribosyltransferase (Acetivibrio thermocellus (strain ATCC 27405 / DSM 1237 / JCM 9322 / NBRC 103400 / NCIMB 10682 / NRRL B-4536 / VPI 7372) (Clostridium thermocellum)).